Here is a 73-residue protein sequence, read N- to C-terminus: Translation initiation factor IF-1 (73 aa).

The region spanning Met1–Arg73 is the S1-like domain.

This sequence belongs to the IF-1 family. As to quaternary structure, component of the 30S ribosomal translation pre-initiation complex which assembles on the 30S ribosome in the order IF-2 and IF-3, IF-1 and N-formylmethionyl-tRNA(fMet); mRNA recruitment can occur at any time during PIC assembly.

Its subcellular location is the cytoplasm. Its function is as follows. One of the essential components for the initiation of protein synthesis. Stabilizes the binding of IF-2 and IF-3 on the 30S subunit to which N-formylmethionyl-tRNA(fMet) subsequently binds. Helps modulate mRNA selection, yielding the 30S pre-initiation complex (PIC). Upon addition of the 50S ribosomal subunit IF-1, IF-2 and IF-3 are released leaving the mature 70S translation initiation complex. This Acidothermus cellulolyticus (strain ATCC 43068 / DSM 8971 / 11B) protein is Translation initiation factor IF-1.